Consider the following 145-residue polypeptide: Large ribosomal subunit protein uL11 (145 aa).

This sequence belongs to the universal ribosomal protein uL11 family. Part of the ribosomal stalk of the 50S ribosomal subunit. Interacts with L10 and the large rRNA to form the base of the stalk. L10 forms an elongated spine to which L12 dimers bind in a sequential fashion forming a multimeric L10(L12)X complex. Post-translationally, one or more lysine residues are methylated.

Its function is as follows. Forms part of the ribosomal stalk which helps the ribosome interact with GTP-bound translation factors. The polypeptide is Large ribosomal subunit protein uL11 (Rickettsia felis (strain ATCC VR-1525 / URRWXCal2) (Rickettsia azadi)).